The following is a 281-amino-acid chain: Shikimate dehydrogenase (NADP(+)) (281 aa).

Shikimate-binding positions include 15–17 and threonine 62; that span reads SKS. Catalysis depends on lysine 66, which acts as the Proton acceptor. The shikimate site is built by asparagine 87 and aspartate 102. NADP(+) contacts are provided by residues 127 to 131, 151 to 156, and leucine 217; these read GAGGS and NRTPER. Tyrosine 219 contributes to the shikimate binding site. Glycine 241 contacts NADP(+).

The protein belongs to the shikimate dehydrogenase family. As to quaternary structure, homodimer.

It carries out the reaction shikimate + NADP(+) = 3-dehydroshikimate + NADPH + H(+). The protein operates within metabolic intermediate biosynthesis; chorismate biosynthesis; chorismate from D-erythrose 4-phosphate and phosphoenolpyruvate: step 4/7. In terms of biological role, involved in the biosynthesis of the chorismate, which leads to the biosynthesis of aromatic amino acids. Catalyzes the reversible NADPH linked reduction of 3-dehydroshikimate (DHSA) to yield shikimate (SA). The sequence is that of Shikimate dehydrogenase (NADP(+)) from Stenotrophomonas maltophilia (strain K279a).